The chain runs to 417 residues: MSLAHTTVLLWAWGSLQAFEIVEKESVFQRTPCPAFLVFDNAAYLADMSFELPCHCKPEDVSAVVWYYQKHLGSKRTTVLTDFDGRLLTEAAHVRVGSSMLVRFSIRMFSLLVFRAQPEDTGLYFCGTREGDYFYAYDVDIQSNKEIVASFKDMAQEPLPDEYYGALHVFTTFWEWTPCDRCGVRGEQWRFGLCYLQYPDLSPRYIKTRSAVVSCGSGAVPWKLHLQTKYHTPELQFQSCLVSCQKRNKTRKGVLAIYSYVSKLGSRPWVPQVPIQFHQQRLGHGLIISCPGARPEHAVAWDKDNQPLYRAQYLKGVNRSMRVFIDHGNHLHIRFTQLSDRGIYYCWLQGLKIAGFRLGVITRGRYPASLSDPETRTAIELTLMGYLLITIFFITIHLCRCCCQSRCCPNFSAQTLL.

A signal peptide spans Met1 to Ala18. Residues Phe19–Thr377 are Extracellular-facing. N-linked (GlcNAc...) asparagine glycosylation is found at Asn248 and Asn318. The Ig-like V-type domain occupies Pro268–Thr362. Cysteines 290 and 346 form a disulfide. A helical membrane pass occupies residues Ala378–Leu398. Topologically, residues Cys399 to Leu417 are cytoplasmic.

This sequence belongs to the FAM187 family.

The protein localises to the membrane. The chain is Ig-like V-type domain-containing protein FAM187A (Fam187a) from Mus musculus (Mouse).